Here is a 434-residue protein sequence, read N- to C-terminus: Alpha-enolase (434 aa).

Ser40 lines the Mg(2+) pocket. Substrate is bound by residues His158 and Glu167. The Proton donor role is filled by Glu210. 3 residues coordinate Mg(2+): Asp245, Glu293, and Asp318. Positions 293 and 318 each coordinate substrate. The active-site Proton acceptor is the Lys343. Substrate-binding positions include 370-373 (SHRS) and Lys394.

Belongs to the enolase family. As to quaternary structure, homodimer. Mg(2+) is required as a cofactor.

The protein localises to the cytoplasm. It carries out the reaction (2R)-2-phosphoglycerate = phosphoenolpyruvate + H2O. It functions in the pathway carbohydrate degradation; glycolysis; pyruvate from D-glyceraldehyde 3-phosphate: step 4/5. The sequence is that of Alpha-enolase from Alligator mississippiensis (American alligator).